Here is a 200-residue protein sequence, read N- to C-terminus: Recombination protein RecR (200 aa).

The C4-type zinc-finger motif lies at 60–75; sequence CVYCQALTEDDVCNIC. Residues 83–177 form the Toprim domain; it reads TKLCIIESML…KISRIGFGVP (95 aa).

This sequence belongs to the RecR family.

May play a role in DNA repair. It seems to be involved in an RecBC-independent recombinational process of DNA repair. It may act with RecF and RecO. The chain is Recombination protein RecR from Francisella tularensis subsp. mediasiatica (strain FSC147).